A 273-amino-acid polypeptide reads, in one-letter code: Programmed cell death 1 ligand 2 (273 aa).

Residues methionine 1–alanine 19 form the signal peptide. At leucine 20 to threonine 220 the chain is on the extracellular side. The Ig-like V-type domain occupies phenylalanine 21–lysine 118. 5 N-linked (GlcNAc...) asparagine glycosylation sites follow: asparagine 37, asparagine 64, asparagine 157, asparagine 163, and asparagine 189. Disulfide bonds link cysteine 42–cysteine 102 and cysteine 143–cysteine 192. Residues serine 122 to threonine 203 form the Ig-like C2-type domain. The helical transmembrane segment at tryptophan 221–isoleucine 241 threads the bilayer. Over alanine 242 to isoleucine 273 the chain is Cytoplasmic.

This sequence belongs to the immunoglobulin superfamily. BTN/MOG family. Interacts with PDCD1. Highly expressed in heart, placenta, pancreas, lung and liver and weakly expressed in spleen, lymph nodes and thymus.

It is found in the secreted. Its subcellular location is the endomembrane system. The protein resides in the cell membrane. Functionally, involved in the costimulatory signal, essential for T-cell proliferation and IFNG production in a PDCD1-independent manner. Interaction with PDCD1 inhibits T-cell proliferation by blocking cell cycle progression and cytokine production. The chain is Programmed cell death 1 ligand 2 (PDCD1LG2) from Homo sapiens (Human).